Reading from the N-terminus, the 156-residue chain is Small ribosomal subunit protein uS7 (156 aa).

It belongs to the universal ribosomal protein uS7 family. Part of the 30S ribosomal subunit. Contacts proteins S9 and S11.

In terms of biological role, one of the primary rRNA binding proteins, it binds directly to 16S rRNA where it nucleates assembly of the head domain of the 30S subunit. Is located at the subunit interface close to the decoding center, probably blocks exit of the E-site tRNA. This is Small ribosomal subunit protein uS7 from Synechococcus sp. (strain RCC307).